The chain runs to 337 residues: Acetyl-coenzyme A synthetase (337 aa).

Residues 131 to 134 (RGGR), Thr249, and Asn273 contribute to the CoA site. ATP is bound at residue 325–327 (GEP).

This sequence belongs to the ATP-dependent AMP-binding enzyme family. The cofactor is Mg(2+). In terms of processing, acetylated. Deacetylation by the SIR2-homolog deacetylase activates the enzyme.

The catalysed reaction is acetate + ATP + CoA = acetyl-CoA + AMP + diphosphate. Catalyzes the conversion of acetate into acetyl-CoA (AcCoA), an essential intermediate at the junction of anabolic and catabolic pathways. AcsA undergoes a two-step reaction. In the first half reaction, AcsA combines acetate with ATP to form acetyl-adenylate (AcAMP) intermediate. In the second half reaction, it can then transfer the acetyl group from AcAMP to the sulfhydryl group of CoA, forming the product AcCoA. This chain is Acetyl-coenzyme A synthetase (acsA), found in Nostoc linckia.